Here is a 181-residue protein sequence, read N- to C-terminus: Transcription antitermination protein NusB (181 aa).

The segment at 1–36 is disordered; that stretch reads MTEDNNKAAGAKPRPARQVRTGLTSTGARKASAKSN.

The protein belongs to the NusB family.

Its function is as follows. Involved in transcription antitermination. Required for transcription of ribosomal RNA (rRNA) genes. Binds specifically to the boxA antiterminator sequence of the ribosomal RNA (rrn) operons. This is Transcription antitermination protein NusB from Variovorax paradoxus (strain S110).